The following is a 196-amino-acid chain: Peptidyl-tRNA hydrolase (196 aa).

Residue Tyr-19 participates in tRNA binding. Residue His-24 is the Proton acceptor of the active site. Residues Tyr-68, Asn-70, and Asn-116 each contribute to the tRNA site.

Belongs to the PTH family. In terms of assembly, monomer.

It is found in the cytoplasm. The catalysed reaction is an N-acyl-L-alpha-aminoacyl-tRNA + H2O = an N-acyl-L-amino acid + a tRNA + H(+). Functionally, hydrolyzes ribosome-free peptidyl-tRNAs (with 1 or more amino acids incorporated), which drop off the ribosome during protein synthesis, or as a result of ribosome stalling. Catalyzes the release of premature peptidyl moieties from peptidyl-tRNA molecules trapped in stalled 50S ribosomal subunits, and thus maintains levels of free tRNAs and 50S ribosomes. The protein is Peptidyl-tRNA hydrolase of Aromatoleum aromaticum (strain DSM 19018 / LMG 30748 / EbN1) (Azoarcus sp. (strain EbN1)).